The primary structure comprises 229 residues: Cytidylate kinase (229 aa).

An ATP-binding site is contributed by 12-20 (GPSGSGKGT).

Belongs to the cytidylate kinase family. Type 1 subfamily.

The protein resides in the cytoplasm. It carries out the reaction CMP + ATP = CDP + ADP. The enzyme catalyses dCMP + ATP = dCDP + ADP. The chain is Cytidylate kinase from Pseudomonas syringae pv. syringae (strain B728a).